Consider the following 403-residue polypeptide: Serine/threonine transporter SstT (403 aa).

9 consecutive transmembrane segments (helical) span residues 16–36, 45–65, 79–99, 138–158, 175–195, 214–234, 295–315, 327–347, and 353–373; these read QIVIGLIAGIALALLAPAIAL, FVSALKAVAPVLVFILVMASI, ILWLYLLGTFSAAVVAVVASM, ALLNANFIGVLTWAIGLGVAL, GVTLIVRVVIRFAPLGIFGLV, LAVLIGCMLFVALVMNPLIVF, MAGAAITITVLTLAAVHTLGI, MVAAVCACGASGVAGGSLLLI, and LFGIPSEIAMQVVAVGFIIGV.

The protein belongs to the dicarboxylate/amino acid:cation symporter (DAACS) (TC 2.A.23) family.

The protein localises to the cell inner membrane. It catalyses the reaction L-serine(in) + Na(+)(in) = L-serine(out) + Na(+)(out). The catalysed reaction is L-threonine(in) + Na(+)(in) = L-threonine(out) + Na(+)(out). Its function is as follows. Involved in the import of serine and threonine into the cell, with the concomitant import of sodium (symport system). The protein is Serine/threonine transporter SstT of Pseudomonas putida (strain W619).